Here is a 128-residue protein sequence, read N- to C-terminus: Fluoride-specific ion channel FluC (128 aa).

Transmembrane regions (helical) follow at residues Leu-7–Val-27, Phe-37–Ile-57, Thr-73–Phe-93, and Ala-96–Ala-116. Residues Gly-77 and Thr-80 each coordinate Na(+).

The protein belongs to the fluoride channel Fluc/FEX (TC 1.A.43) family.

The protein resides in the cell inner membrane. It carries out the reaction fluoride(in) = fluoride(out). Na(+) is not transported, but it plays an essential structural role and its presence is essential for fluoride channel function. Fluoride-specific ion channel. Important for reducing fluoride concentration in the cell, thus reducing its toxicity. This is Fluoride-specific ion channel FluC from Nautilia profundicola (strain ATCC BAA-1463 / DSM 18972 / AmH).